The chain runs to 2904 residues: Protein eyes shut homolog (2904 aa).

The signal sequence occupies residues 1-23 (MRNPKLAIIVFLLSCVIYGPVYS). Residues asparagine 41 and asparagine 135 are each glycosylated (N-linked (GlcNAc...) asparagine). 4 consecutive EGF-like domains span residues 174–216 (KPQL…RYCE), 217–259 (NVDG…VNCS), 263–298 (GNQN…TYCE), and 300–336 (KRLF…LNCE). Intrachain disulfides connect cysteine 178-cysteine 193, cysteine 187-cysteine 204, cysteine 206-cysteine 215, cysteine 221-cysteine 232, cysteine 226-cysteine 247, and cysteine 249-cysteine 258. Asparagine 257 and asparagine 266 each carry an N-linked (GlcNAc...) asparagine glycan. Intrachain disulfides connect cysteine 267-cysteine 276, cysteine 271-cysteine 286, cysteine 288-cysteine 297, cysteine 304-cysteine 315, cysteine 309-cysteine 324, and cysteine 326-cysteine 335. N-linked (GlcNAc...) asparagine glycosylation occurs at asparagine 362. EGF-like domains lie at 375–411 (QAEV…KNCE), 413–451 (IIDF…EFCQ), and 453–496 (LENA…PYCE). Cystine bridges form between cysteine 379–cysteine 390, cysteine 384–cysteine 399, cysteine 401–cysteine 410, cysteine 417–cysteine 430, cysteine 424–cysteine 439, cysteine 441–cysteine 450, cysteine 457–cysteine 470, cysteine 464–cysteine 484, cysteine 486–cysteine 495, cysteine 502–cysteine 513, cysteine 507–cysteine 522, and cysteine 524–cysteine 533. The region spanning 498–534 (EVNECDSSPCQHQGTCTDFVGYYKCTCPSGYTGIDCE) is the EGF-like 8; calcium-binding domain. The N-linked (GlcNAc...) asparagine glycan is linked to asparagine 544. Residues 565-603 (HTPCPHYLQPCANGGHCVLHNITSYSCVCAPGWTGATCL) enclose the EGF-like 9 domain. Disulfide bonds link cysteine 568–cysteine 581, cysteine 575–cysteine 591, cysteine 593–cysteine 602, cysteine 609–cysteine 620, cysteine 614–cysteine 629, cysteine 631–cysteine 640, cysteine 645–cysteine 656, cysteine 650–cysteine 665, cysteine 667–cysteine 676, cysteine 683–cysteine 694, cysteine 688–cysteine 703, cysteine 705–cysteine 714, cysteine 721–cysteine 732, cysteine 726–cysteine 741, cysteine 743–cysteine 752, cysteine 759–cysteine 772, cysteine 764–cysteine 781, cysteine 783–cysteine 792, cysteine 799–cysteine 810, cysteine 804–cysteine 819, cysteine 821–cysteine 830, cysteine 837–cysteine 848, cysteine 842–cysteine 857, cysteine 859–cysteine 868, cysteine 875–cysteine 886, cysteine 880–cysteine 895, cysteine 897–cysteine 906, cysteine 913–cysteine 924, cysteine 918–cysteine 933, cysteine 935–cysteine 944, cysteine 951–cysteine 962, cysteine 956–cysteine 971, cysteine 973–cysteine 982, cysteine 987–cysteine 999, cysteine 993–cysteine 1014, cysteine 1016–cysteine 1025, cysteine 1032–cysteine 1042, cysteine 1037–cysteine 1051, cysteine 1053–cysteine 1062, cysteine 1069–cysteine 1080, cysteine 1074–cysteine 1089, cysteine 1091–cysteine 1100, cysteine 1107–cysteine 1118, cysteine 1112–cysteine 1127, cysteine 1129–cysteine 1138, cysteine 1145–cysteine 1156, cysteine 1150–cysteine 1167, cysteine 1169–cysteine 1178, cysteine 1185–cysteine 1198, cysteine 1192–cysteine 1208, cysteine 1210–cysteine 1219, cysteine 1226–cysteine 1237, cysteine 1231–cysteine 1246, cysteine 1248–cysteine 1257, cysteine 1264–cysteine 1275, cysteine 1269–cysteine 1284, cysteine 1286–cysteine 1295, cysteine 1302–cysteine 1313, cysteine 1307–cysteine 1322, cysteine 1324–cysteine 1333, cysteine 1340–cysteine 1351, cysteine 1345–cysteine 1360, cysteine 1362–cysteine 1371, cysteine 1378–cysteine 1388, cysteine 1383–cysteine 1397, cysteine 1399–cysteine 1408, cysteine 1415–cysteine 1426, cysteine 1420–cysteine 1435, cysteine 1437–cysteine 1446, cysteine 1453–cysteine 1469, cysteine 1463–cysteine 1479, cysteine 1481–cysteine 1490, cysteine 1497–cysteine 1508, cysteine 1502–cysteine 1517, cysteine 1519–cysteine 1528, cysteine 1535–cysteine 1545, cysteine 1540–cysteine 1556, and cysteine 1558–cysteine 1567. N-linked (GlcNAc...) asparagine glycosylation is present at asparagine 585. The EGF-like 10; calcium-binding domain maps to 605–641 (NINECVQHRCQNRATCVDEVGGYSCLCGHGYTGVHCE). The 36-residue stretch at 642–677 (LDFCSGHQCSEHAVCVDQQHNYTCRCMLGYEGTLCE) folds into the EGF-like 11 domain. An N-linked (GlcNAc...) asparagine glycan is attached at asparagine 662. Positions 679-715 (ETDECKSAPCTNNATCIDLVAGYQCLCAPGFKGRTCS) constitute an EGF-like 12; calcium-binding domain. Asparagine 691 is a glycosylation site (N-linked (GlcNAc...) asparagine). EGF-like domains follow at residues 717 to 753 (SMNE…HDCS), 755 to 793 (PATG…LFCE), and 795 to 831 (SINH…RLCE). In terms of domain architecture, EGF-like 16; calcium-binding spans 833–869 (NIDDCLDKPCGALSICKDGINAYDCFCAPGFVGNNCE). The region spanning 871–907 (EVNECLSQPCQNGASCSDELNSFSCLCLAGTTGSLCE) is the EGF-like 17; calcium-binding domain. The 37-residue stretch at 909 to 945 (NIDECQSSPCMNNGTCLDLSDGFKCICPSGFSGPECS) folds into the EGF-like 18; calcium-binding domain. Residue asparagine 921 is glycosylated (N-linked (GlcNAc...) asparagine). An EGF-like 19; calcium-binding domain is found at 947–983 (DINECVSYPCKNGGSCIDQPGNYYCRCLAPFKGLNCE). The 43-residue stretch at 984 to 1026 (LLPCEAVNPCDNGAECVEEADLVLFPLGFQCRCRKGFTGPRCE) folds into the EGF-like 20 domain. One can recognise an EGF-like 21; calcium-binding domain in the interval 1028 to 1063 (NIDECSSNPCLNGFCYDAVDGFYCLCNPGYAGVRCE). Positions 1065–1101 (HINDCASNMCENNSTCVDLHLSYNCLCLPGWEGEYCQ) constitute an EGF-like 22 domain. Asparagine 1077 is a glycosylation site (N-linked (GlcNAc...) asparagine). One can recognise an EGF-like 23; calcium-binding domain in the interval 1103 to 1139 (ETNECLSNPCKNNATCTDLLNAYRCVCPQGWTGLDCD). A glycan (N-linked (GlcNAc...) asparagine) is linked at asparagine 1115. EGF-like domains follow at residues 1141 to 1179 (DVKE…PLCE) and 1181 to 1220 (PYDP…TRCE). N-linked (GlcNAc...) asparagine glycosylation is present at asparagine 1195. The region spanning 1222–1258 (DSDDCVSRPCQNRGICVDGVNSYSCFCEPGFSGLHCE) is the EGF-like 26; calcium-binding domain. Residues 1260–1296 (DINECASNPCQNQAVCQDLVNGFQCSCVPGYFGPHCN) form the EGF-like 27; calcium-binding domain. The region spanning 1298 to 1334 (DVNECDSSPCLHESVCINKPGGFACVCSAGFSGKWCE) is the EGF-like 28; calcium-binding domain. Residues 1336-1372 (NVDECKSNPCRNNGSCIDGLNGYQCVCSRGFMGDHCE) enclose the EGF-like 29; calcium-binding domain. A glycan (N-linked (GlcNAc...) asparagine) is linked at asparagine 1348. The 36-residue stretch at 1374-1409 (NTDECSSGPCVHGSCLDEIDAFSCQCEVGWTGHRCQ) folds into the EGF-like 30; calcium-binding domain. The 37-residue stretch at 1411 to 1447 (NINECEAHPCLNGGSCVDLLDKYACICADGFTGKNCD) folds into the EGF-like 31; calcium-binding domain. One can recognise an EGF-like 32 domain in the interval 1449–1491 (DQNVCLQTSLNFSLCFNGGTCVDGPGVNFTCSCRPGFMGDFCE). Asparagine 1459 and asparagine 1476 each carry an N-linked (GlcNAc...) asparagine glycan. The EGF-like 33; calcium-binding domain maps to 1493–1529 (EMNECCSEPCFNGAICQDLINGYQCHCRPGWTGLHCE). An EGF-like 34 domain is found at 1531–1568 (DINECLLQPCNQGMCIQNEPGHGYTCFCRPGFVGENCE). Asparagine 1591, asparagine 1755, and asparagine 1788 each carry an N-linked (GlcNAc...) asparagine glycan. The Laminin G-like 1 domain occupies 1640–1818 (ASFGGYSGNS…AIARNNVDNC (179 aa)). Disulfide bonds link cysteine 1792-cysteine 1818, cysteine 1860-cysteine 1871, cysteine 1865-cysteine 1885, and cysteine 1887-cysteine 1896. Positions 1856–1897 (PAPVCPQGICLNGGTCRPVSLPSGASSFFCDCPLHFTGRLCE) constitute an EGF-like 35 domain. The region spanning 1902 to 2102 (VFSPRFDGNS…NIQNCDAAVC (201 aa)) is the Laminin G-like 2 domain. 2 N-linked (GlcNAc...) asparagine glycosylation sites follow: asparagine 2025 and asparagine 2064. 7 cysteine pairs are disulfide-bonded: cysteine 2071-cysteine 2102, cysteine 2102-cysteine 2113, cysteine 2107-cysteine 2122, cysteine 2124-cysteine 2133, cysteine 2138-cysteine 2149, cysteine 2143-cysteine 2159, and cysteine 2161-cysteine 2170. 2 consecutive EGF-like domains span residues 2098–2134 (DAAV…KLCQ) and 2135–2171 (FTAC…LLCD). N-linked (GlcNAc...) asparagine glycosylation is found at asparagine 2175 and asparagine 2216. The Laminin G-like 3 domain maps to 2182-2372 (SGLDEFGYSS…PLSGRNVGQC (191 aa)). Cystine bridges form between cysteine 2339–cysteine 2372, cysteine 2377–cysteine 2388, cysteine 2382–cysteine 2397, cysteine 2399–cysteine 2408, cysteine 2415–cysteine 2431, cysteine 2425–cysteine 2440, and cysteine 2442–cysteine 2451. EGF-like domains are found at residues 2373–2409 (GVNP…ALCS) and 2411–2452 (KVSF…LHCQ). One can recognise a Laminin G-like 4 domain in the interval 2459–2642 (DPFFSGNQSS…NVGDWDGTAC (184 aa)). N-linked (GlcNAc...) asparagine glycosylation is found at asparagine 2465, asparagine 2528, and asparagine 2570. EGF-like domains lie at 2638–2675 (DGTA…SRCQ) and 2676–2714 (QSIQ…THCD). 6 disulfides stabilise this stretch: cysteine 2642-cysteine 2653, cysteine 2647-cysteine 2663, cysteine 2665-cysteine 2674, cysteine 2680-cysteine 2691, cysteine 2685-cysteine 2702, and cysteine 2704-cysteine 2713. Residue asparagine 2694 is glycosylated (N-linked (GlcNAc...) asparagine). A Laminin G-like 5 domain is found at 2719 to 2894 (LKTIRFIGNS…TKQLQFLQTC (176 aa)). 2 N-linked (GlcNAc...) asparagine glycosylation sites follow: asparagine 2750 and asparagine 2816.

It belongs to the EYS family. Expressed in retina where it localizes between the retinal pigment epithelium and the outer nuclear layer (at protein level).

The protein resides in the cell projection. It localises to the cilium. Its subcellular location is the cytoplasm. The protein localises to the cytoskeleton. It is found in the cilium axoneme. The protein resides in the secreted. It localises to the extracellular space. Its subcellular location is the extracellular matrix. The protein localises to the interphotoreceptor matrix. In terms of biological role, required to maintain the integrity of photoreceptor cells. Specifically required for normal morphology of the photoreceptor ciliary pocket, and might thus facilitate protein trafficking between the photoreceptor inner and outer segments via the transition zone. The polypeptide is Protein eyes shut homolog (Danio rerio (Zebrafish)).